The primary structure comprises 742 residues: MSDEDSMLLNFTTNEDTAGSSYKQAAKVTGGRWKDRRRMKMKLEGKTVSRKRKANTTGDEGIIPGRGENSIKKLHKESSYSSEEQEKYKGRNAHNTQGRTLPADSQFVSSLFTSNREITTAVNTNIHDENVAINPSNAPLKGDQFASLGVSSLLVSHLEQKMRIKKPTSIQKQAIPQIIGNAGKNDFFIHAQTGSGKTLSYLLPIISTILNMDTHVDRTSGAFALVIAPTRELASQIYHVCSTLVSCCHYLVPCLLIGGERKKSEKARLRKGCNFIIGTPGRVLDHLQNTKVIKEQLSQSLRYIVLDEGDKLMELGFDETISEIIKIVHDIPINSEKFPKLPHKLVHMLCSATLTDGVNRLRNVALKDYKLISNGTKKDSDIVTVAPDQLLQRITIVPPKLRLVTLAATLNNITKDFIASGQQSKTLRTIVFVSCSDSVEFHYDAFSGSDGHHKNLTGDSVRLLTKGNTMFPCFSDSRDPDVVIYKLHGSLSQQMRTSTLQHFARDNEATKGKHLIMFCTDVASRGLDLPHVGSVIELDPPFAVEDHLHRVGRTARAGEKGESLLFLLPGEEEKYMDYIQPYHPMGWELLKFDKEILMPAFKDVNVNRNDKFIRKDEKSSKNKDVGDKEYEWDTNATTWHLNIERRVVGDSAFKNLAVKGFISHVRAYATHISQEKKFFNVKFLHLGHLAKSFGLRERPKAMGLQSSKDGNSEKKPTKENSKNKMFRMARMAEKQIASEFNY.

Positions 45 to 100 (GKTVSRKRKANTTGDEGIIPGRGENSIKKLHKESSYSSEEQEKYKGRNAHNTQGRT) are disordered. Residues 143-172 (DQFASLGVSSLLVSHLEQKMRIKKPTSIQK) carry the Q motif motif. Residues 178 to 372 (IIGNAGKNDF…NVALKDYKLI (195 aa)) form the Helicase ATP-binding domain. 191-198 (AQTGSGKT) is a binding site for ATP. The DEGD box motif lies at 307-310 (DEGD). A Helicase C-terminal domain is found at 405-605 (TLAATLNNIT…ILMPAFKDVN (201 aa)). A disordered region spans residues 701 to 726 (AMGLQSSKDGNSEKKPTKENSKNKMF). Basic and acidic residues predominate over residues 710 to 722 (GNSEKKPTKENSK).

Belongs to the DEAD box helicase family. DDX31/DBP7 subfamily.

The protein resides in the nucleus. It is found in the nucleolus. The enzyme catalyses ATP + H2O = ADP + phosphate + H(+). In terms of biological role, ATP-binding RNA helicase involved in the biogenesis of 60S ribosomal subunits and is required for the normal formation of 25S and 5.8S rRNAs. In Saccharomyces cerevisiae (strain ATCC 204508 / S288c) (Baker's yeast), this protein is ATP-dependent RNA helicase DBP7 (DBP7).